The sequence spans 257 residues: MSLAGKNVVFVGGLGFIAYEACKYLMNNDLASLFVFDVLDKPEAIKALQEINPKTKVYYTKFDITNKESIKQSLADVISKVQHIDALINGAGILTDPNVELTMNINLIGLINTTLEALPLMDKNKHGRGGVIVNIASVLGLEPCPPAAVYCASKFGVVGFSRSLGDPFYYEHTGVAVVTFCPGLTDTPLKNNIGSKYTFDYSKEIGEKLNSSKTQKPEVCGAHLAQAIELMDNGAIYISNQGTLTKVKPSVYWEPTY.

Position 9-33 (9-33 (VFVGGLGFIAYEACKYLMNNDLASL)) interacts with NAD(+). Substrate is bound at residue Ser-137. Tyr-150 functions as the Proton acceptor in the catalytic mechanism.

This sequence belongs to the short-chain dehydrogenases/reductases (SDR) family. In terms of assembly, homodimer.

The enzyme catalyses a primary alcohol + NAD(+) = an aldehyde + NADH + H(+). It carries out the reaction a secondary alcohol + NAD(+) = a ketone + NADH + H(+). The polypeptide is Alcohol dehydrogenase 1 (ADH1) (Ceratitis capitata (Mediterranean fruit fly)).